A 354-amino-acid polypeptide reads, in one-letter code: Uroporphyrinogen decarboxylase (354 aa).

Substrate-binding positions include 27–31 (RQAGR), Asp-77, Tyr-154, Thr-209, and His-327.

It belongs to the uroporphyrinogen decarboxylase family. Homodimer.

Its subcellular location is the cytoplasm. It carries out the reaction uroporphyrinogen III + 4 H(+) = coproporphyrinogen III + 4 CO2. It participates in porphyrin-containing compound metabolism; protoporphyrin-IX biosynthesis; coproporphyrinogen-III from 5-aminolevulinate: step 4/4. Catalyzes the decarboxylation of four acetate groups of uroporphyrinogen-III to yield coproporphyrinogen-III. The polypeptide is Uroporphyrinogen decarboxylase (Escherichia coli O7:K1 (strain IAI39 / ExPEC)).